Reading from the N-terminus, the 381-residue chain is MADDKKTNDYTVEMDKLDQGSKNFEAPLPPVQPRSAPNAQLANNPILPVLAYCGSSIMMTVMNKYVLSGTDFNLNFLLLCVQSIVCIVAIQTCKASKLITYRDFNADEAKKWFPITLLLIGMIYTGSKALQFLSIPVYTIFKNLTIILIAYGEVLWFGGSVTGLTLFSFGLMVLSSIIAAWADIKHAVESSGDATAKVSTLNAGYIWMLINCLCTSSYVLGMRKRIKLTNFKDFDTMFYNNLLSIPVLLVLTFLMEDWSSANITRNFPPADRNGIMFAMILSGLSSVFISYTSAWCVRVTSSTTYSMVGALNKLPIAVSGLIFFDAPVTFPSVSAIVVGFVSGIVYAVAKIKQNAKPKTGVLPTSNPVSASSQSMRDSLRS.

The Cytoplasmic portion of the chain corresponds to Met-1–Gln-40. The helical transmembrane segment at Leu-41 to Val-61 threads the bilayer. Over Met-62–Asp-71 the chain is Lumenal. The helical transmembrane segment at Phe-72 to Thr-92 threads the bilayer. The Cytoplasmic segment spans residues Cys-93–Lys-110. The chain crosses the membrane as a helical span at residues Lys-111 to Ser-127. Over Lys-128–Ser-134 the chain is Lumenal. Residues Ile-135 to Tyr-151 traverse the membrane as a helical segment. Over Gly-152 to Ser-160 the chain is Cytoplasmic. A helical membrane pass occupies residues Val-161 to Ala-182. The Lumenal segment spans residues Asp-183–Thr-200. Residues Leu-201–Gly-221 form a helical membrane-spanning segment. The Cytoplasmic segment spans residues Met-222–Asp-233. Residues Phe-234 to Leu-254 form a helical membrane-spanning segment. Residues Met-255–Gly-274 lie on the Lumenal side of the membrane. Asn-262 carries N-linked (GlcNAc...) asparagine glycosylation. Residues Ile-275–Trp-295 traverse the membrane as a helical segment. At Cys-296–Thr-303 the chain is on the cytoplasmic side. Residues Thr-304–Phe-324 form a helical membrane-spanning segment. Over Asp-325–Pro-327 the chain is Lumenal. A helical membrane pass occupies residues Val-328–Val-348. Over Ala-349–Ser-381 the chain is Cytoplasmic. The interval Leu-362–Ser-381 is disordered.

Belongs to the TPT transporter family. SLC35D subfamily. Homooligomer.

Its subcellular location is the golgi apparatus membrane. It is found in the cytoplasmic vesicle membrane. It localises to the endoplasmic reticulum membrane. Involved in the import of GDP-mannose from the cytoplasm into the Golgi lumen. This Aspergillus clavatus (strain ATCC 1007 / CBS 513.65 / DSM 816 / NCTC 3887 / NRRL 1 / QM 1276 / 107) protein is GDP-mannose transporter (gmt1).